A 244-amino-acid polypeptide reads, in one-letter code: Ribonuclease PH (244 aa).

Phosphate-binding positions include R90 and 128-130 (GTR).

Belongs to the RNase PH family. Homohexameric ring arranged as a trimer of dimers.

It catalyses the reaction tRNA(n+1) + phosphate = tRNA(n) + a ribonucleoside 5'-diphosphate. Functionally, phosphorolytic 3'-5' exoribonuclease that plays an important role in tRNA 3'-end maturation. Removes nucleotide residues following the 3'-CCA terminus of tRNAs; can also add nucleotides to the ends of RNA molecules by using nucleoside diphosphates as substrates, but this may not be physiologically important. Probably plays a role in initiation of 16S rRNA degradation (leading to ribosome degradation) during starvation. The sequence is that of Ribonuclease PH from Cutibacterium acnes (strain DSM 16379 / KPA171202) (Propionibacterium acnes).